Consider the following 67-residue polypeptide: Protein C' (67 aa).

It belongs to the rhabdoviruses C protein family.

Functionally, seems to stimulates transcription by the viral polymerase. May play a role in viral pathogenesis or transmission by insects vectors. This chain is Protein C' (P), found in Vesicular stomatitis Indiana virus (strain 98COE North America) (VSIV).